Consider the following 57-residue polypeptide: DNA gyrase inhibitor YacG (57 aa).

Zn(2+)-binding residues include C10, C13, C25, and C29.

This sequence belongs to the DNA gyrase inhibitor YacG family. As to quaternary structure, interacts with GyrB. Zn(2+) is required as a cofactor.

Inhibits all the catalytic activities of DNA gyrase by preventing its interaction with DNA. Acts by binding directly to the C-terminal domain of GyrB, which probably disrupts DNA binding by the gyrase. In Brucella melitensis biotype 1 (strain ATCC 23456 / CCUG 17765 / NCTC 10094 / 16M), this protein is DNA gyrase inhibitor YacG.